Here is a 368-residue protein sequence, read N- to C-terminus: Histidinol-phosphate aminotransferase (368 aa).

Lys229 is subject to N6-(pyridoxal phosphate)lysine.

Belongs to the class-II pyridoxal-phosphate-dependent aminotransferase family. Histidinol-phosphate aminotransferase subfamily. As to quaternary structure, homodimer. The cofactor is pyridoxal 5'-phosphate.

The catalysed reaction is L-histidinol phosphate + 2-oxoglutarate = 3-(imidazol-4-yl)-2-oxopropyl phosphate + L-glutamate. The protein operates within amino-acid biosynthesis; L-histidine biosynthesis; L-histidine from 5-phospho-alpha-D-ribose 1-diphosphate: step 7/9. This chain is Histidinol-phosphate aminotransferase, found in Acidovorax sp. (strain JS42).